Here is a 316-residue protein sequence, read N- to C-terminus: Ribose-phosphate pyrophosphokinase (316 aa).

Residues 40–42 and 99–100 contribute to the ATP site; these read DGE and RQ. Positions 133 and 174 each coordinate Mg(2+). Lysine 197 is an active-site residue. D-ribose 5-phosphate-binding positions include arginine 199, aspartate 223, and 227–231; that span reads DTAGT.

This sequence belongs to the ribose-phosphate pyrophosphokinase family. Class I subfamily. In terms of assembly, homohexamer. Requires Mg(2+) as cofactor.

It is found in the cytoplasm. The catalysed reaction is D-ribose 5-phosphate + ATP = 5-phospho-alpha-D-ribose 1-diphosphate + AMP + H(+). Its pathway is metabolic intermediate biosynthesis; 5-phospho-alpha-D-ribose 1-diphosphate biosynthesis; 5-phospho-alpha-D-ribose 1-diphosphate from D-ribose 5-phosphate (route I): step 1/1. In terms of biological role, involved in the biosynthesis of the central metabolite phospho-alpha-D-ribosyl-1-pyrophosphate (PRPP) via the transfer of pyrophosphoryl group from ATP to 1-hydroxyl of ribose-5-phosphate (Rib-5-P). This is Ribose-phosphate pyrophosphokinase from Fusobacterium nucleatum subsp. nucleatum (strain ATCC 25586 / DSM 15643 / BCRC 10681 / CIP 101130 / JCM 8532 / KCTC 2640 / LMG 13131 / VPI 4355).